Reading from the N-terminus, the 442-residue chain is Kelch domain-containing protein 10 (442 aa).

Residues 1–57 are disordered; it reads MSAAQGWDRNRRRGGGAAGAGGGGSGAGGGSGGSGGRGTGQLNRFVQLSGRPHLPGK. Arginine 13 is modified (omega-N-methylarginine). Residues 15–39 are compositionally biased toward gly residues; the sequence is GGAAGAGGGGSGAGGGSGGSGGRGT. Kelch repeat units follow at residues 87 to 154, 155 to 198, 199 to 260, 261 to 319, 320 to 364, and 365 to 403; these read RPPP…PREL, ASMS…ALLS, CRGK…PEER, YRHE…RRCH, SCVQ…PEPV, and YFHCAAVTPAGCMYIHGGVVNIHENKRTGSLFKIWLVVP. The interaction with CUL2 stretch occupies residues 401-442; the sequence is VVPSLLELAWEKLLAAFPNLANLSRTQLLHLGLTQGLIERLK.

This sequence belongs to the KLHDC10 family. In terms of assembly, component of a CRL2 E3 ubiquitin-protein ligase complex, also named ECS (Elongin BC-CUL2/5-SOCS-box protein) complex, composed of CUL2, Elongin BC (ELOB and ELOC), RBX1 and substrate-specific adapter KLHDC10. Interacts (via the 6 Kelch repeats) with PPP5C.

The protein localises to the nucleus. The protein resides in the cytoplasm. It participates in protein modification; protein ubiquitination. In terms of biological role, substrate-recognition component of a Cul2-RING (CRL2) E3 ubiquitin-protein ligase complex of the DesCEND (destruction via C-end degrons) pathway, which recognizes a C-degron located at the extreme C-terminus of target proteins, leading to their ubiquitination and degradation. The C-degron recognized by the DesCEND pathway is usually a motif of less than ten residues and can be present in full-length proteins, truncated proteins or proteolytically cleaved forms. The CRL2(KLHDC10) complex specifically recognizes proteins with a proline-glycine (Pro-Gly) or an alanine tail (CAT tail) at the C-terminus, leading to their ubiquitination and degradation. The CRL2(KLHDC10) complex is involved in the ribosome-associated quality control (RQC) pathway, which mediates the extraction of incompletely synthesized nascent chains from stalled ribosomes: CRL2(KLHDC10) acts downstream of NEMF and recognizes CAT tails associated with stalled nascent chains, leading to their ubiquitination and degradation. Participates in the oxidative stress-induced cell death through MAP3K5 activation. Inhibits PPP5C phosphatase activity on MAP3K5. Acts as a regulator of necroptosis. This chain is Kelch domain-containing protein 10, found in Homo sapiens (Human).